Reading from the N-terminus, the 873-residue chain is Protein SEY1 (873 aa).

The disordered stretch occupies residues 1–21; the sequence is MVANGHFAGSADGQDSSSYEH. The Cytoplasmic portion of the chain corresponds to 1–749; the sequence is MVANGHFAGS…KRSAIGGITQ (749 aa). The GB1/RHD3-type G domain occupies 49–307; it reads GFNYHLISVF…IPADGFAVYA (259 aa). Position 59-66 (59-66) interacts with GTP; the sequence is GSQSTGKS. The stretch at 482 to 506 forms a coiled coil; sequence SNYQQELSLYQKDLERTSGQLRRDE. Residues 676-703 are disordered; the sequence is LDKWIGHTPSSATPADEEDLTPIGGVDD. Over residues 690–703 the composition is skewed to acidic residues; sequence ADEEDLTPIGGVDD. Residues 750–770 traverse the membrane as a helical segment; that stretch reads VPLYFYGLLFALGWNEILAVL. At 771-773 the chain is on the lumenal side; sequence RNP. A helical membrane pass occupies residues 774–794; the sequence is VYFLLLFVCAIGAYITYQLNL. Topologically, residues 795-873 are cytoplasmic; sequence WGPIIKMTEA…EDVDDDDDDF (79 aa). Residues 828-873 form a disordered region; the sequence is RQAMAMSGARNATEEHEMSRLSRKPAERGGRKNRADEDVDDDDDDF. Basic and acidic residues predominate over residues 839 to 863; the sequence is ATEEHEMSRLSRKPAERGGRKNRAD. Acidic residues predominate over residues 864–873; that stretch reads EDVDDDDDDF.

The protein belongs to the TRAFAC class dynamin-like GTPase superfamily. GB1/RHD3 GTPase family. RHD3 subfamily.

It localises to the endoplasmic reticulum membrane. Cooperates with the reticulon proteins and tubule-shaping DP1 family proteins to generate and maintain the structure of the tubular endoplasmic reticulum network. Has GTPase activity, which is required for its function in ER organization. The protein is Protein SEY1 of Ajellomyces capsulatus (strain G186AR / H82 / ATCC MYA-2454 / RMSCC 2432) (Darling's disease fungus).